Here is a 227-residue protein sequence, read N- to C-terminus: Probable chorismate pyruvate-lyase (227 aa).

The substrate site is built by arginine 75, leucine 113, and glutamate 173. Residues 192-227 (SGDWSAHPRVREHGRPLEHTASRAHPATRASDEQRR) form a disordered region. Over residues 200–212 (RVREHGRPLEHTA) the composition is skewed to basic and acidic residues.

This sequence belongs to the UbiC family.

Its subcellular location is the cytoplasm. It catalyses the reaction chorismate = 4-hydroxybenzoate + pyruvate. It functions in the pathway cofactor biosynthesis; ubiquinone biosynthesis. Functionally, removes the pyruvyl group from chorismate, with concomitant aromatization of the ring, to provide 4-hydroxybenzoate (4HB) for the ubiquinone pathway. This is Probable chorismate pyruvate-lyase from Paraburkholderia xenovorans (strain LB400).